Reading from the N-terminus, the 276-residue chain is Radial spoke head protein 9 homolog (276 aa).

It belongs to the flagellar radial spoke RSP9 family. As to quaternary structure, component of the axonemal radial spoke 1 (RS1) and 2 (RS2) complexes, at least composed of spoke head proteins RSPH1, RSPH3, RSPH9 and the cilia-specific component RSPH4A or sperm-specific component RSPH6A, spoke stalk proteins RSPH14, DNAJB13, DYDC1, ROPN1L and NME5, and the RS1 complex-specific anchor protein IQUB. Interacts with IQUB. Interacts with RSPH3B. Interacts with RSPH4A. Interacts with RSPH6A. Interacts with CFAP61. Interacts with LRRC23.

It localises to the cytoplasm. It is found in the cytoskeleton. Its subcellular location is the cilium axoneme. The protein resides in the flagellum axoneme. The protein localises to the cell projection. It localises to the kinocilium. Its function is as follows. Functions as part of axonemal radial spoke complexes that play an important part in the motility of sperm and cilia. Essential for both the radial spoke head assembly and the central pair microtubule stability in ependymal motile cilia. Required for motility of olfactory and neural cilia and for the structural integrity of ciliary axonemes in both 9+0 and 9+2 motile cilia. In Homo sapiens (Human), this protein is Radial spoke head protein 9 homolog (RSPH9).